Consider the following 63-residue polypeptide: Laccase-C1 (63 aa).

This sequence belongs to the multicopper oxidase family. As to quaternary structure, monomer. Cu cation is required as a cofactor. Glycosylated; contains 16% carbohydrates.

Its subcellular location is the secreted. The enzyme catalyses 4 hydroquinone + O2 = 4 benzosemiquinone + 2 H2O. Its activity is regulated as follows. Inhibited by sodium azide. In terms of biological role, lignin degradation and detoxification of lignin-derived products. Oxidation of a broad range of substrates including mono-, di- and polyphenols, aromatic amines and methoxy-substituted phenols accompanied by reduction of oxygen to water. The chain is Laccase-C1 from Cerrena unicolor (Canker rot fungus).